Reading from the N-terminus, the 163-residue chain is Putative 4-hydroxy-4-methyl-2-oxoglutarate aldolase (163 aa).

Residues 76 to 79 and Arg-98 each bind substrate; that span reads GDML. Asp-99 serves as a coordination point for a divalent metal cation.

This sequence belongs to the class II aldolase/RraA-like family. Homotrimer. A divalent metal cation is required as a cofactor.

The enzyme catalyses 4-hydroxy-4-methyl-2-oxoglutarate = 2 pyruvate. It carries out the reaction oxaloacetate + H(+) = pyruvate + CO2. Catalyzes the aldol cleavage of 4-hydroxy-4-methyl-2-oxoglutarate (HMG) into 2 molecules of pyruvate. Also contains a secondary oxaloacetate (OAA) decarboxylase activity due to the common pyruvate enolate transition state formed following C-C bond cleavage in the retro-aldol and decarboxylation reactions. This chain is Putative 4-hydroxy-4-methyl-2-oxoglutarate aldolase, found in Pseudomonas putida (strain ATCC 47054 / DSM 6125 / CFBP 8728 / NCIMB 11950 / KT2440).